The chain runs to 303 residues: Centromere protein O (303 aa).

The stretch at 38–77 (AALRKNQELVLELRKKRDELKAKIERHKAEIQAFRGREEA) forms a coiled coil.

Belongs to the CENP-O/MCM21 family.

The protein resides in the nucleus. Its subcellular location is the chromosome. It is found in the centromere. Its function is as follows. Probable component of a centromeric complex involved in assembly of kinetochore proteins, mitotic progression and chromosome segregation. The chain is Centromere protein O (cenpo) from Xenopus tropicalis (Western clawed frog).